A 440-amino-acid polypeptide reads, in one-letter code: MKKAGIIHLGCSKNQVDTEILMGFLKELGYTFTPYLGEADLVLVNTCAFIKPAWQEAEENINFLKEYKENNKNLKIVVTGCYVERFEKELEDRYPFVDLFIGPGEYDKFVSLITSNGERKIHSSPASSFMYTHKMPRVLISPNFWVYVKISEGCNNFCSYCTIPFIRGRLRSRSIDDIIKEVEILVQKGVKEINLIAQDTTRYGEDLYGKSALVDLLKSIENIKGDFYVRILYSYPSRVTKDLINFIKVSEKVVPYFDIPIQHVNDEILKKMNRSYKKDDIIRVWSTIRENFEDAVIRTTVMVGFPGETEENFEELIAFIKAYPFDRLGAFTYYNEEGTISKNFDGQIDEDEKIRRYDILMSTQKEISKKLNAKLLGREFDVIIENEKGKYFIGRSWREAPEVDGVIMIPKEGSRSISIGDRVRVKIKKYRAYDLLGELV.

The region spanning 2–118 (KKAGIIHLGC…FVSLITSNGE (117 aa)) is the MTTase N-terminal domain. Positions 11, 47, 81, 154, 158, and 161 each coordinate [4Fe-4S] cluster. Residues 140–370 (ISPNFWVYVK…MSTQKEISKK (231 aa)) enclose the Radical SAM core domain. The region spanning 373 to 440 (AKLLGREFDV…RAYDLLGELV (68 aa)) is the TRAM domain.

This sequence belongs to the methylthiotransferase family. RimO subfamily. The cofactor is [4Fe-4S] cluster.

It localises to the cytoplasm. It carries out the reaction L-aspartate(89)-[ribosomal protein uS12]-hydrogen + (sulfur carrier)-SH + AH2 + 2 S-adenosyl-L-methionine = 3-methylsulfanyl-L-aspartate(89)-[ribosomal protein uS12]-hydrogen + (sulfur carrier)-H + 5'-deoxyadenosine + L-methionine + A + S-adenosyl-L-homocysteine + 2 H(+). Its function is as follows. Catalyzes the methylthiolation of an aspartic acid residue of ribosomal protein uS12. The sequence is that of Ribosomal protein uS12 methylthiotransferase RimO from Dictyoglomus thermophilum (strain ATCC 35947 / DSM 3960 / H-6-12).